Here is a 329-residue protein sequence, read N- to C-terminus: Mo25-like protein (329 aa).

This sequence belongs to the Mo25 family.

In Schizosaccharomyces pombe (strain 972 / ATCC 24843) (Fission yeast), this protein is Mo25-like protein (pmo25).